The primary structure comprises 179 residues: Replication restart protein DnaT (179 aa).

Residues 156-179 form a disordered region; that stretch reads GGLPKRDVNTVSEPDSQIPPGFRG.

It belongs to the DnaT family. Homooligomerizes. Interacts with PriB. Component of the replication restart primosome. Primosome assembly occurs via a 'hand-off' mechanism. PriA binds to replication forks, subsequently PriB then DnaT bind; DnaT then displaces ssDNA to generate the helicase loading substrate.

Functionally, involved in the restart of stalled replication forks, which reloads the replicative helicase on sites other than the origin of replication. Can function in multiple replication restart pathways. Displaces ssDNA from a PriB-ssDNA complex. Probably forms a spiral filament on ssDNA. The chain is Replication restart protein DnaT from Escherichia coli O7:K1 (strain IAI39 / ExPEC).